Consider the following 178-residue polypeptide: Large ribosomal subunit protein uL6 (178 aa).

Belongs to the universal ribosomal protein uL6 family. In terms of assembly, part of the 50S ribosomal subunit.

In terms of biological role, this protein binds to the 23S rRNA, and is important in its secondary structure. It is located near the subunit interface in the base of the L7/L12 stalk, and near the tRNA binding site of the peptidyltransferase center. The chain is Large ribosomal subunit protein uL6 from Sulfurovum sp. (strain NBC37-1).